A 503-amino-acid chain; its full sequence is Inosine-5'-monophosphate dehydrogenase 1 (503 aa).

At serine 2 the chain carries N-acetylserine. The CBS domain occupies methionine 167 to glycine 225. NAD(+)-binding positions include aspartate 265–serine 267 and glycine 315–glycine 317. K(+)-binding residues include glycine 317 and glycine 319. Serine 320 contacts IMP. Cysteine 322 is a binding site for K(+). Cysteine 322 functions as the Thioimidate intermediate in the catalytic mechanism. IMP-binding positions include aspartate 355 to glycine 357, glycine 378 to serine 379, and tyrosine 402 to glycine 406. The Proton acceptor role is filled by arginine 418. Glutamine 430 lines the IMP pocket. K(+) contacts are provided by glutamate 489, glycine 490, and glycine 491.

This sequence belongs to the IMPDH/GMPR family. In terms of assembly, homotetramer. K(+) is required as a cofactor.

The protein resides in the cytoplasm. It carries out the reaction IMP + NAD(+) + H2O = XMP + NADH + H(+). It functions in the pathway purine metabolism; XMP biosynthesis via de novo pathway; XMP from IMP: step 1/1. With respect to regulation, mycophenolic acid (MPA) is a non-competitive inhibitor that prevents formation of the closed enzyme conformation by binding to the same site as the amobile flap. In contrast, mizoribine monophosphate (MZP) is a competitive inhibitor that induces the closed conformation. MPA is a potent inhibitor of mammalian IMPDHs but a poor inhibitor of the bacterial enzymes. MZP is a more potent inhibitor of bacterial IMPDH. Its function is as follows. Catalyzes the conversion of inosine 5'-phosphate (IMP) to xanthosine 5'-phosphate (XMP), the first committed and rate-limiting step in the de novo synthesis of guanine nucleotides, and therefore plays an important role in the regulation of cell growth. The sequence is that of Inosine-5'-monophosphate dehydrogenase 1 from Arabidopsis thaliana (Mouse-ear cress).